The primary structure comprises 118 residues: Large ribosomal subunit protein uL18 (118 aa).

A compositionally biased stretch (basic and acidic residues) spans M1–R10. The segment at M1–V20 is disordered. Residues S11–V20 are compositionally biased toward basic residues.

Belongs to the universal ribosomal protein uL18 family. Part of the 50S ribosomal subunit; part of the 5S rRNA/L5/L18/L25 subcomplex. Contacts the 5S and 23S rRNAs.

Functionally, this is one of the proteins that bind and probably mediate the attachment of the 5S RNA into the large ribosomal subunit, where it forms part of the central protuberance. The polypeptide is Large ribosomal subunit protein uL18 (Acaryochloris marina (strain MBIC 11017)).